Here is a 434-residue protein sequence, read N- to C-terminus: 3-phosphoshikimate 1-carboxyvinyltransferase (434 aa).

3-phosphoshikimate is bound by residues Lys-15, Ser-16, and Arg-20. Lys-15 is a binding site for phosphoenolpyruvate. Residues Gly-96 and Arg-124 each contribute to the phosphoenolpyruvate site. Ser-169, Gln-171, Ser-195, Asp-319, and Lys-346 together coordinate 3-phosphoshikimate. A phosphoenolpyruvate-binding site is contributed by Gln-171. The Proton acceptor role is filled by Asp-319. Residues Arg-350 and Arg-394 each contribute to the phosphoenolpyruvate site.

This sequence belongs to the EPSP synthase family. Monomer.

It is found in the cytoplasm. The catalysed reaction is 3-phosphoshikimate + phosphoenolpyruvate = 5-O-(1-carboxyvinyl)-3-phosphoshikimate + phosphate. It functions in the pathway metabolic intermediate biosynthesis; chorismate biosynthesis; chorismate from D-erythrose 4-phosphate and phosphoenolpyruvate: step 6/7. Catalyzes the transfer of the enolpyruvyl moiety of phosphoenolpyruvate (PEP) to the 5-hydroxyl of shikimate-3-phosphate (S3P) to produce enolpyruvyl shikimate-3-phosphate and inorganic phosphate. The sequence is that of 3-phosphoshikimate 1-carboxyvinyltransferase from Chlorobaculum tepidum (strain ATCC 49652 / DSM 12025 / NBRC 103806 / TLS) (Chlorobium tepidum).